The primary structure comprises 1068 residues: Integrator complex subunit 3 homolog (1068 aa).

Disordered stretches follow at residues 916–939 and 1001–1068; these read YPSS…STPS and VGRR…NDSD. Serine 1038, serine 1039, serine 1043, and serine 1044 each carry phosphoserine.

It belongs to the Integrator subunit 3 family. Belongs to the multiprotein complex Integrator, at least composed of IntS1, IntS2, IntS3, IntS4, omd/IntS5, IntS6, defl/IntS7, IntS8, IntS9, IntS10, IntS11, IntS12, asun/IntS13, IntS14 and IntS15. The core complex associates with protein phosphatase 2A subunits mts/PP2A and Pp2A-29B, to form the Integrator-PP2A (INTAC) complex.

Its subcellular location is the nucleus. It is found in the cytoplasm. Its function is as follows. Component of the integrator complex, a multiprotein complex that terminates RNA polymerase II (Pol II) transcription in the promoter-proximal region of genes. The integrator complex provides a quality checkpoint during transcription elongation by driving premature transcription termination of transcripts that are unfavorably configured for transcriptional elongation: the complex terminates transcription by (1) catalyzing dephosphorylation of the C-terminal domain (CTD) of Pol II subunit Polr2A/Rbp1 and Spt5, and (2) degrading the exiting nascent RNA transcript via endonuclease activity. The integrator complex is also involved in the 3'-end processing of the U7 snRNA, and also the spliceosomal snRNAs U1, U2, U4 and U5. The sequence is that of Integrator complex subunit 3 homolog (IntS3) from Drosophila sechellia (Fruit fly).